The chain runs to 274 residues: tRNA-cytidine(32) 2-sulfurtransferase (274 aa).

Positions 40–45 match the PP-loop motif motif; it reads SGGKDS. [4Fe-4S] cluster-binding residues include Cys-115, Cys-118, and Cys-206.

The protein belongs to the TtcA family. Homodimer. The cofactor is Mg(2+). [4Fe-4S] cluster serves as cofactor.

The protein resides in the cytoplasm. It carries out the reaction cytidine(32) in tRNA + S-sulfanyl-L-cysteinyl-[cysteine desulfurase] + AH2 + ATP = 2-thiocytidine(32) in tRNA + L-cysteinyl-[cysteine desulfurase] + A + AMP + diphosphate + H(+). The protein operates within tRNA modification. In terms of biological role, catalyzes the ATP-dependent 2-thiolation of cytidine in position 32 of tRNA, to form 2-thiocytidine (s(2)C32). The sulfur atoms are provided by the cysteine/cysteine desulfurase (IscS) system. This chain is tRNA-cytidine(32) 2-sulfurtransferase, found in Pseudomonas aeruginosa (strain LESB58).